A 264-amino-acid polypeptide reads, in one-letter code: Rhamnosyltransferase WbbL (264 aa).

It belongs to the glycosyltransferase 2 family.

It functions in the pathway bacterial outer membrane biogenesis; lipopolysaccharide biosynthesis. Its function is as follows. Rhamnosyltransferase involved in lipopolysaccharide biosynthesis. The protein is Rhamnosyltransferase WbbL (wbbL) of Escherichia coli (strain K12).